The chain runs to 81 residues: 2,3-bisphosphoglycerate-independent phosphoglycerate mutase (81 aa).

Ser-14 acts as the Phosphoserine intermediate in catalysis. Ser-14 contributes to the Mn(2+) binding site. A substrate-binding site is contributed by His-75.

It belongs to the BPG-independent phosphoglycerate mutase family. As to quaternary structure, monomer. It depends on Mn(2+) as a cofactor.

The enzyme catalyses (2R)-2-phosphoglycerate = (2R)-3-phosphoglycerate. It participates in carbohydrate degradation; glycolysis; pyruvate from D-glyceraldehyde 3-phosphate: step 3/5. In terms of biological role, catalyzes the interconversion of 2-phosphoglycerate and 3-phosphoglycerate. The sequence is that of 2,3-bisphosphoglycerate-independent phosphoglycerate mutase (gpmI) from Tomato big bud phytoplasma.